The chain runs to 779 residues: LPS-assembly protein LptD (779 aa).

Residues methionine 1 to alanine 23 form the signal peptide.

This sequence belongs to the LptD family. Component of the lipopolysaccharide transport and assembly complex. Interacts with LptE and LptA.

The protein resides in the cell outer membrane. Its function is as follows. Together with LptE, is involved in the assembly of lipopolysaccharide (LPS) at the surface of the outer membrane. The polypeptide is LPS-assembly protein LptD (Haemophilus ducreyi (strain 35000HP / ATCC 700724)).